The sequence spans 47 residues: PhoP/PhoQ regulator MgrB (47 aa).

A helical membrane pass occupies residues 6 to 26 (WVALVVVVLACLLLWAQVFNM).

It belongs to the MgrB family. May form homooligomers. Probably interacts with the periplasmic domain of PhoQ.

The protein resides in the cell inner membrane. Its function is as follows. PhoP-regulated transcription is redox-sensitive, being activated when the periplasm becomes more reducing. MgrB acts between DsbA/DsbB and PhoP/PhoQ in this pathway. Represses PhoP/PhoQ signaling, possibly by binding to the periplasmic domain of PhoQ, altering its activity and that of downstream effector PhoP. The chain is PhoP/PhoQ regulator MgrB from Escherichia coli O1:K1 / APEC.